We begin with the raw amino-acid sequence, 3010 residues long: MSTNGKPQRKTKRNTNRRPQDVKFPGGGQIVGGVYLLPRRGPRLGVRATRKTWERSQPRGRRQPIPKARQPEGRAWAQPGYPWPLYGNEGLGWAGWLVSPRGSRPNWGPTDPRRRSRNLGKVIDTLTCGFADLMGYIPLVGAPLGGVARALAHGVRVLEDGVNYATGNLPGCSFSIFLLALLSCLTIPASAYEVHNVSGIYHVTNDCSNSSIVYEAADMIMHTPGCVPCVRENNSSRCWVALTPTLAARNNSVPTATIRRHVDLLVGAAAFCSAMYVGDLCGSVFLVSQLFTFSPRRYETVQDCNCSIYPGHVTGHRMAWDMMMNWSPTTALVVSQLLRIPQAVVDMVGGAHWGVLAGLAYYSMVGNWAKVLIVMLLFAGVDGSTIVSGGTVARTTHSLASLFTQGASQKIQLINTNGSWHINRTALNCNDSLQTGFLASLFYAHRFNASGCPERMASCRSIDKFDQGWGPITYTEADIQDQRPYCWHYAPRPCGIVPASQVCGPVYCFTPSPVVVGTTDRFGAPTYSWGENETDVLILNNTRPPQGNWFGCTWMNSTGFTKTCGGPPCNIGGGGNNTLVCPTDCFRKHPEATYTKCGSGPWLTPRCMVDYPYRLWHYPCTVNFTIFKVRMYVGGVEHRLNAACNWTRGERCDLEDRDRSELSPLLLSTTEWQILPCSFTGLPALSTGLIHLHQNVVDVQYLYGIGSAVVSFAIKWEYILLLFLLLADARVCACLWMMLLIAQAEAALENLVVFNAASVAGMHGTLSFLVFFCAAWYIKGRLVPGAAYALYGVWPLLLLLLALPPRAYAMDREMAASCGGAVFVGLVLLTLSPHYKMFLARLIWWLQYFITRAEAHLQVWIPPLNVRGGRDAIILLTCAAYPELIFDITKILLAILGPLMVLQAGLTRIPYFVRAQGLIRACMLVRKAAGGHYVQMALMKLAALTGTYVYDHLTPLQDWAHTGLRDLAVAVEPVVFSDMETKIITWGADTAACGDIILGLPVSARRGREILLGPADSLEGRGWRLLAPITAYAQQTRGLFGCIITSLTGRDKNQVEGEVQVVSTATQSFLATCINGVCWTVYHGAGSKTLAGPKGPITQMYTNVDQDLVGWHAPQGARSLTPCTCGSSDLYLVTRHADVIPVRRRGDSRGSLLSPRPISYLKGSSGGPLLCPSGHVVGIFRAAVCTRGVAKAVDFVPVESMETTMRSPVFTDNSSPPAVPQAFQVAHLHAPTGSGKSTKVPAAYAAQGYKVLVLNPSVAATLGFGAYMSKAHGVDPNIRTGVRTITTGAPITYSTYGKFLADGGCSGGAYDIIMCDECHSTDSTTILGIGTVLDQAETAGARLVVLATATPPGSVTVPHPNIEEIALSNTGEIPFYGKAIPIETIKGGRHLIFCHSKKKCDELAAKLSALGIHAVAYYRGLDVSVIPASGNVVVVATDALMTGFTGDFDSVIDCNTCVTQTVDFSLDPTFTIETTTMPQDAVSRSQRRGRTSRGRRGIYRFVTPGERPSGMFDSSVLCECYDAGCAWYELTPAETSVRLRAYLNTPGLPVCQDHLEFWESVFTGLTHIDAHFLSQTKQAGDNFPYLVAYQATVCARAQAPPPSWDQMWKCLTRLKPTLHGPTPLLYRLGAVQNEVTLTHPITKYIMACMSADLEVVTSTWVLVGGVLAALAAYCLTTGSVVIVGRIILSGKPAVVPDREVLYQEFDEMEECASHLPYIEQGMQLAEQFKQKALGLLQTATKQAEAAAPVVESKWRTLEAFWANDMWNFISGIQYLAGLSTLPGNPAIASLMAFTASITSPLTTQSTLLFNILGGWVAAQLAPPGAASAFVGAGIAGAAVGSIGLGKVLVDMVAGYGAGVAGALVAFKVMSGEMPSTEDLVNLLPAILSPGALVVGVVCAAILRRHVDPGEGAVQWMNRLIAFASRGNHVSPTHYVPESDAAARVTQILSGLTITQLLRRLHQWINEDCSTPCSGSWLRDVWDWICTVLADFKTWLQSKLLPRLPGVPFFSCQRGYKGVWRGDGIMQTTCPCGAQLTGHVKNGSMRIWGPKTCSNTWHGTFPINAYTTGPCTPSPAPNYSRALWRVAAEEYVEVRRVGDFHYVTGMTTDNVKCPCQVPAPEFFTEVDGVRLHRYAPACKPLLREEVSFQVGLNQYVVGSQLPCEPEPDVAVLTSMLTDPSHITAETAKRRLARGSPPSLASSSASQLSALSLKAACTTRHTPPDADLIEANLLWRQEMGGNITRVESENKVVILDSFDPLRAEEDEREVSVPAEILRKSRKFPPALPVWARPDYNPPLLEPWKDPDYVPPVVHGCPLPPVKAPPIPPPRRKRTVVLTESTVSSALAELATKTFGSSESSAAGSGTATAPPDQPSDDGDAGSDVESCSSMPPLEGEPGDPDLSDGSWSTVSEEDGEGVICCSMSYTWTGALITPCAAEESKLPINALSNSLLRHHNMVYATTSRSASQRQKKVTIDRLQVLDDHYRDVLKEMKAKASTVKAKLLSVEEACKLTPPHSARSKFGYGAKDVRNLSGKAINHIRSVWKDLLEDTETPIDTTIMAKNEVFCVQPEKGGRKPARLIVFPDLGVRVCEKMALYDVVSTLPQAVMGSSYGFQYSPGQRVEFLVNAWKSKKCPMGFSYDTRCFDSTVTESDIRVEESIYQCCDLAPEARQAIRSLTERLYIGGPLTNSKGQNCGYRRCRASGVLTTSCGNTLTCYLKASAACRAAKLQDCTMLVCGDDLVVICESAGTQEDAASLRVFTEAMTRYSAPPGDLPQPEYDQELITSCSSNVSVAHDASGKRVYYLTRDPTTPLARAAWATARHTPVNSWLGNIIMYAPTLWARMILMTHFFSILLAQEQLEKALDCQIYGACYSIEPLDLPQIIERLHGLSAFSLHSYSPGEINRVASCLRKLGVPPLRAWRHRARSVRAKLLSQGGRAATCGRYLFNWAVKTKLKLTPIPAASQLDLSKWFVAGYGGGDIYHSLSRARPRWFMLCLLLLSVGVGIYLLPNR.

S2 bears the N-acetylserine; by host mark. The segment at 2–23 is interaction with STAT1; that stretch reads STNGKPQRKTKRNTNRRPQDVK. The tract at residues 2–58 is interaction with EIF2AK2/PKR; sequence STNGKPQRKTKRNTNRRPQDVKFPGGGQIVGGVYLLPRRGPRLGVRATRKTWERSQP. The segment at 2-59 is interaction with DDX3X; sequence STNGKPQRKTKRNTNRRPQDVKFPGGGQIVGGVYLLPRRGPRLGVRATRKTWERSQPR. The disordered stretch occupies residues 2–75; it reads STNGKPQRKT…PKARQPEGRA (74 aa). Over 2–168 the chain is Cytoplasmic; it reads STNGKPQRKT…EDGVNYATGN (167 aa). 4 short sequence motifs (nuclear localization signal) span residues 5-13, 38-43, 58-64, and 66-71; these read GKPQRKTKR, PRRGPR, PRGRRQP, and PKARQP. A compositionally biased stretch (basic residues) spans 7–16; it reads PQRKTKRNTN. The residue at position 99 (S99) is a Phosphoserine; by host. Positions 112–152 are important for endoplasmic reticulum and mitochondrial localization; the sequence is PRRRSRNLGKVIDTLTCGFADLMGYIPLVGAPLGGVARALA. Residue S116 is modified to Phosphoserine; by host PKA. Positions 122–173 are interaction with APOA2; that stretch reads VIDTLTCGFADLMGYIPLVGAPLGGVARALAHGVRVLEDGVNYATGNLPGCS. Residues 164–167 are important for lipid droplets localization; that stretch reads YATG. A helical membrane pass occupies residues 169-189; sequence LPGCSFSIFLLALLSCLTIPA. A propeptide spans 178 to 191 (ER anchor for the core protein, removed in mature form by host signal peptidase); that stretch reads LLALLSCLTIPASA. Residues 190–358 lie on the Lumenal side of the membrane; that stretch reads SAYEVHNVSG…GGAHWGVLAG (169 aa). N-linked (GlcNAc...) asparagine; by host glycosylation is found at N196, N209, N234, and N250. Residues 265 to 296 form an important for fusion region; it reads LVGAAAFCSAMYVGDLCGSVFLVSQLFTFSPR. N305 carries N-linked (GlcNAc...) asparagine; by host glycosylation. Residues 359 to 379 traverse the membrane as a helical segment; it reads LAYYSMVGNWAKVLIVMLLFA. Residues 380–725 are Lumenal-facing; that stretch reads GVDGSTIVSG…WEYILLLFLL (346 aa). Residues 385–411 are HVR1; that stretch reads TIVSGGTVARTTHSLASLFTQGASQKI. N417, N423, N430, and N448 each carry an N-linked (GlcNAc...) (high mannose) asparagine; by host glycan. 4 disulfides stabilise this stretch: C429–C552, C452–C459, C486–C494, and C503–C508. Residues 474–479 are HVR2; the sequence is YTEADI. Residues 480-493 are CD81-binding 1; it reads QDQRPYCWHYAPRP. N-linked (GlcNAc...) (high mannose) asparagine; by host glycosylation is present at N532. N540 is a glycosylation site (N-linked (GlcNAc...) asparagine; by host). The CD81-binding 2 stretch occupies residues 544–551; it reads PPQGNWFG. An N-linked (GlcNAc...) (high mannose) asparagine; by host glycan is attached at N556. C564 and C569 form a disulfide bridge. N576 is a glycosylation site (N-linked (GlcNAc...) (high mannose) asparagine; by host). Disulfide bonds link C581–C585, C597–C620, and C607–C644. N-linked (GlcNAc...) (high mannose) asparagine; by host glycosylation is found at N623 and N645. A disulfide bond links C652 and C677. The segment at 660-671 is PKR/eIF2-alpha phosphorylation homology domain (PePHD); that stretch reads SELSPLLLSTTE. A helical membrane pass occupies residues 726–746; sequence LADARVCACLWMMLLIAQAEA. Residues 747–757 are Lumenal-facing; the sequence is ALENLVVFNAA. The chain crosses the membrane as a helical span at residues 758-778; it reads SVAGMHGTLSFLVFFCAAWYI. Topologically, residues 779-781 are cytoplasmic; it reads KGR. A helical transmembrane segment spans residues 782–803; it reads LVPGAAYALYGVWPLLLLLLAL. Over 804 to 813 the chain is Lumenal; the sequence is PPRAYAMDRE. The chain crosses the membrane as a helical span at residues 814-834; sequence MAASCGGAVFVGLVLLTLSPH. The Cytoplasmic segment spans residues 835-838; sequence YKMF. Residues 839-859 form a helical membrane-spanning segment; that stretch reads LARLIWWLQYFITRAEAHLQV. The Lumenal portion of the chain corresponds to 860-881; it reads WIPPLNVRGGRDAIILLTCAAY. The helical transmembrane segment at 882-902 threads the bilayer; sequence PELIFDITKILLAILGPLMVL. Positions 903 to 1026 constitute a Peptidase C18 domain; the sequence is QAGLTRIPYF…SLEGRGWRLL (124 aa). Topologically, residues 903 to 1657 are cytoplasmic; sequence QAGLTRIPYF…CMSADLEVVT (755 aa). The interval 904–1206 is protease NS2-3; the sequence is AGLTRIPYFV…PVESMETTMR (303 aa). C922 carries the S-palmitoyl cysteine; by host lipid modification. The interval 929–949 is interaction with host SCPS1; that stretch reads AGGHYVQMALMKLAALTGTYV. Active-site for protease NS2 activity; shared with dimeric partner residues include H952, E972, and C993. Positions 1027–1208 constitute a Peptidase S29 domain; sequence APITAYAQQT…ESMETTMRSP (182 aa). Catalysis depends on charge relay system; for serine protease NS3 activity residues H1083 and D1107. Zn(2+)-binding residues include C1123 and C1125. S1165 functions as the Charge relay system; for serine protease NS3 activity in the catalytic mechanism. Positions 1171 and 1175 each coordinate Zn(2+). The Helicase ATP-binding domain maps to 1217–1369; it reads PAVPQAFQVA…PNIEEIALSN (153 aa). 1230 to 1237 is a binding site for ATP; that stretch reads APTGSGKS. The Mg(2+) site is built by S1237 and E1317. Residues 1316-1319 carry the DECH box motif; sequence DECH. Residues 1486–1497 form an RNA-binding region; the sequence is QRRGRTSRGRRG. The chain crosses the membrane as a helical span at residues 1658–1678; sequence STWVLVGGVLAALAAYCLTTG. Residues 1679–1690 are NS3-binding; sequence SVVIVGRIILSG. The Cytoplasmic segment spans residues 1679–1805; sequence SVVIVGRIIL…SITSPLTTQS (127 aa). The chain crosses the membrane as a helical span at residues 1806 to 1824; that stretch reads TLLFNILGGWVAAQLAPPG. Over 1825–1828 the chain is Lumenal; that stretch reads AASA. The helical transmembrane segment at 1829–1849 threads the bilayer; it reads FVGAGIAGAAVGSIGLGKVLV. Position 1850 (D1850) is a topological domain, cytoplasmic. Residues 1851 to 1871 form a helical membrane-spanning segment; the sequence is MVAGYGAGVAGALVAFKVMSG. Topologically, residues 1872–1881 are lumenal; sequence EMPSTEDLVN. Residues 1882 to 1902 traverse the membrane as a helical segment; it reads LLPAILSPGALVVGVVCAAIL. The Cytoplasmic segment spans residues 1903–1972; sequence RRHVDPGEGA…WINEDCSTPC (70 aa). S-palmitoyl cysteine; by host attachment occurs at residues C1968 and C1972. The stretch at 1973 to 2002 is an intramembrane region; it reads SGSWLRDVWDWICTVLADFKTWLQSKLLPR. Residues 2003–2989 lie on the Cytoplasmic side of the membrane; the sequence is LPGVPFFSCQ…YHSLSRARPR (987 aa). 4 residues coordinate Zn(2+): C2011, C2029, C2031, and C2052. Residues 2120 to 2208 are FKBP8-binding; it reads EFFTEVDGVR…ASSSASQLSA (89 aa). The transcriptional activation stretch occupies residues 2120–2332; that stretch reads EFFTEVDGVR…PIPPPRRKRT (213 aa). The segment at 2135–2139 is interaction with non-structural protein 4A; it reads PACKP. The interaction with host SKP2 stretch occupies residues 2189 to 2441; the sequence is RLARGSPPSL…PCAAEESKLP (253 aa). Position 2194 is a phosphoserine; by host; in p56 (S2194). Phosphoserine; by host; in p58 occurs at positions 2197, 2201, 2204, 2207, and 2210. The tract at residues 2210 to 2249 is ISDR; sequence SLKAACTTRHTPPDADLIEANLLWRQEMGGNITRVESENK. Positions 2210–2275 are interaction with EIF2AK2/PKR; it reads SLKAACTTRH…REVSVPAEIL (66 aa). An NS4B-binding region spans residues 2249 to 2306; it reads KVVILDSFDPLRAEEDEREVSVPAEILRKSRKFPPALPVWARPDYNPPLLEPWKDPDY. An SH3-binding motif is present at residues 2322–2325; that stretch reads PPIP. A Nuclear localization signal motif is present at residues 2326–2334; sequence PPRRKRTVV. K2350 is covalently cross-linked (Glycyl lysine isopeptide (Lys-Gly) (interchain with G-Cter in ubiquitin)). Low complexity predominate over residues 2351-2367; that stretch reads TFGSSESSAAGSGTATA. Residues 2351–2409 are disordered; the sequence is TFGSSESSAAGSGTATAPPDQPSDDGDAGSDVESCSSMPPLEGEPGDPDLSDGSWSTVS. A V3 region spans residues 2354–2377; it reads SSESSAAGSGTATAPPDQPSDDGD. Residues S2448 and S2461 each carry the phosphoserine; by host modification. The RdRp catalytic domain occupies 2633–2751; sequence PMGFSYDTRC…ICESAGTQED (119 aa). Mg(2+) contacts are provided by D2639, D2737, and D2738. A helical membrane pass occupies residues 2990 to 3010; it reads WFMLCLLLLSVGVGIYLLPNR.

This sequence belongs to the hepacivirus polyprotein family. In terms of assembly, homooligomer. Interacts with E1 (via C-terminus). Interacts with the non-structural protein 5A. Interacts (via N-terminus) with host STAT1 (via SH2 domain); this interaction results in decreased STAT1 phosphorylation and ubiquitin-mediated proteasome-dependent STAT1 degradation, leading to decreased IFN-stimulated gene transcription. Interacts with host STAT3; this interaction constitutively activates STAT3. Interacts with host LTBR receptor. Interacts with host TNFRSF1A receptor and possibly induces apoptosis. Interacts with host HNRPK. Interacts with host YWHAE. Interacts with host UBE3A/E6AP. Interacts with host DDX3X. Interacts with host APOA2. Interacts with host RXRA protein. Interacts with host SP110 isoform 3/Sp110b; this interaction sequesters the transcriptional corepressor SP110 away from the nucleus. Interacts with host CREB3 nuclear transcription protein; this interaction triggers cell transformation. Interacts with host ACY3. Interacts with host C1QR1. Interacts with host RBM24; this interaction, which enhances the interaction of the mature core protein with 5'-UTR, may inhibit viral translation and favor replication. Interacts with host EIF2AK2/PKR; this interaction induces the autophosphorylation of EIF2AK2. Part of the viral assembly initiation complex composed of NS2, E1, E2, NS3, NS4A, NS5A and the mature core protein. As to quaternary structure, forms a heterodimer with envelope glycoprotein E2. Interacts with mature core protein. Interacts with protease NS2. The heterodimer E1/E2 interacts with host CLDN1; this interaction plays a role in viral entry into host cell. Interacts with host SPSB2 (via C-terminus). Part of the viral assembly initiation complex composed of NS2, E1, E2, NS3, NS4A, NS5A and the mature core protein. Interacts with host NEURL3; this interaction prevents E1 binding to glycoprotein E2. Forms a heterodimer with envelope glycoprotein E1. Interacts with host CD81 and SCARB1 receptors; these interactions play a role in viral entry into host cell. Interacts with host EIF2AK2/PKR; this interaction inhibits EIF2AK2 and probably allows the virus to evade the innate immune response. Interacts with host CD209/DC-SIGN and CLEC4M/DC-SIGNR. Interact with host SPCS1; this interaction is essential for viral particle assembly. Interacts with protease NS2. The heterodimer E1/E2 interacts with host CLDN1; this interaction plays a role in viral entry into host cell. Part of the viral assembly initiation complex composed of NS2, E1, E2, NS3, NS4A, NS5A and the mature core protein. Interacts with host SLC3A2/4F2hc; the interaction may facilitate viral entry into host cell. Interacts with human PLSCR1. In terms of assembly, homohexamer. Homoheptamer. Interacts with protease NS2. As to quaternary structure, homodimer. Interacts with host SPCS1; this interaction is essential for viral particle assembly. Interacts with envelope glycoprotein E1. Interacts with envelope glycoprotein E2. Interacts with viroporin p7. Interacts with serine protease/helicase NS3. Part of the replication complex composed of NS2, NS3, NS4A, NS4B, NS5A and the RNA-directed RNA polymerase embedded in an ER-derived membranous web. Part of the viral assembly initiation complex composed of NS2, E1, E2, NS3, NS4A, NS5A and the mature core protein. Interacts with protease NS2. Interacts with non-structural protein 4A; this interaction stabilizes the folding of NS3 serine protease. NS3-NS4A interaction is essential for NS3 activation and allows membrane anchorage of the latter. NS3/NS4A complex also prevents phosphorylation of host IRF3, thus preventing the establishment of dsRNA induced antiviral state. Interacts with host MAVS; this interaction leads to the cleavage and inhibition of host MAVS. Interacts with host TICAM1; this interaction leads to the cleavage and inhibition of host TICAM1. Interacts with host TANK-binding kinase/TBK1; this interaction results in the inhibition of the association between TBK1 and IRF3, which leads to the inhibition of IRF3 activation. Interacts with host RBM24. Part of the replication complex composed of NS2, NS3, NS4A, NS4B, NS5A and the RNA-directed RNA polymerase embedded in an ER-derived membranous web. Part of the viral assembly initiation complex composed of NS2, E1, E2, NS3, NS4A, NS5A and the mature core protein. In terms of assembly, interacts with NS3 serine protease; this interaction stabilizes the folding of NS3 serine protease. NS3-NS4A interaction is essential for NS3 activation and allows membrane anchorage of the latter. Interacts with non-structural protein 5A (via N-terminus). Part of the replication complex composed of NS2, NS3, NS4A, NS4B, NS5A and the RNA-directed RNA polymerase embedded in an ER-derived membranous web. Part of the viral assembly initiation complex composed of NS2, E1, E2, NS3, NS4A, NS5A and the mature core protein. As to quaternary structure, homomultimer. Interacts with non-structural protein NS5A. Interacts with host PLA2G4C; this interaction likely initiates the recruitment of replication complexes to lipid droplets. Interacts with host STING; this interaction disrupts the interaction between STING and TBK1 thereby suppressing the interferon signaling. Part of the replication complex composed of NS2, NS3, NS4A, NS4B, NS5A and the RNA-directed RNA polymerase embedded in an ER-derived membranous web. Monomer. Homodimer; dimerization is required for RNA-binding. Interacts with the mature core protein. Interacts (via N-terminus) with non-structural protein 4A. Interacts with non-structural protein 4B. Interacts (via region D2) with RNA-directed RNA polymerase. Part of the viral assembly initiation complex composed of NS2, E1, E2, NS3, NS4A, NS5A and the mature core protein. Part of the replication complex composed of NS2, NS3, NS4A, NS4B, NS5A and the RNA-directed RNA polymerase embedded in an ER-derived membranous web. Interacts with host GRB2. Interacts with host BIN1. Interacts with host PIK3R1. Interacts with host SRCAP. Interacts with host FKBP8. Interacts (via C-terminus) with host VAPB (via MSP domain). Interacts with host EIF2AK2/PKR; this interaction leads to disruption of EIF2AK2 dimerization by NS5A and probably allows the virus to evade the innate immune response. Interacts (via N-terminus) with host PACSIN2 (via N-terminus); this interaction attenuates protein kinase C alpha-mediated phosphorylation of PACSIN2 by disrupting the interaction between PACSIN2 and PRKCA. Interacts (via N-terminus) with host SRC kinase (via SH2 domain). Interacts with most Src-family kinases. Interacts with host IFI27 and SKP2; promotes the ubiquitin-mediated proteasomal degradation of NS5A. Interacts with host GPS2. Interacts with host TNFRSF21; this interaction allows the modulation by the virus of JNK, p38 MAPK, STAT3, and Akt signaling pathways in a DR6-dependent manner. Interacts (via N-terminus) with host CIDEB (via N-terminus); this interaction seems to regulate the association of HCV particles with APOE. Interacts with host CHKA/Choline Kinase-alpha; CHKA bridges host PI4KA and NS5A and potentiates NS5A-stimulated PI4KA activity, which then facilitates the targeting of the ternary complex to the ER for viral replication. Interacts with host SPSB2 (via C-terminus); this interaction targets NS5A for ubiquitination and degradation. Interacts with host RAB18; this interaction may promote the association of NS5A and other replicase components with lipid droplets. Interacts (via region D2) with host PPIA/CYPA; the interaction stimulates RNA-binding ability of NS5A and is dependent on the peptidyl-prolyl cis-trans isomerase activity of PPIA/CYPA. Interacts with host TRIM14; this interaction induces the degradation of NS5A. In terms of assembly, homooligomer. Interacts with non-structural protein 5A. Interacts with host VAPB. Interacts with host PRK2/PKN2. Interacts with host HNRNPA1 and SEPT6; these interactions facilitate viral replication. Part of the replication complex composed of NS2, NS3, NS4A, NS4B, NS5A and the RNA-directed RNA polymerase. It depends on Zn(2+) as a cofactor. Mg(2+) is required as a cofactor. In terms of processing, specific enzymatic cleavages in vivo yield mature proteins. The structural proteins, core, E1, E2 and p7 are produced by proteolytic processing by host signal peptidases. The core protein precursor is synthesized as a 23 kDa, which is retained in the ER membrane through the hydrophobic signal peptide. Cleavage by the signal peptidase releases the 21 kDa mature core protein. The cleavage of the core protein precursor occurs between aminoacids 176 and 188 but the exact cleavage site is not known. Some degraded forms of the core protein appear as well during the course of infection. The other proteins (p7, NS2, NS3, NS4A, NS4B, NS5A and NS5B) are cleaved by the viral proteases. Autoprocessing between NS2 and NS3 is mediated by the NS2 cysteine protease catalytic domain and regulated by the NS3 N-terminal domain. Phosphorylated by host PKC and PKA. Post-translationally, ubiquitinated; mediated by UBE3A and leading to core protein subsequent proteasomal degradation. In terms of processing, highly N-glycosylated. Palmitoylation is required for NS2/3 autoprocessing and E2 recruitment to membranes. Post-translationally, palmitoylated. This modification may play a role in its polymerization or in protein-protein interactions. In terms of processing, phosphorylated on serines in a basal form termed p56. p58 is a hyperphosphorylated form of p56. p56 and p58 coexist in the cell in roughly equivalent amounts. Hyperphosphorylation is dependent on the presence of NS4A. Host CSNK1A1/CKI-alpha or RPS6KB1 kinases may be responsible for NS5A phosphorylation. Tyrosine phosphorylation is essential for the interaction with host SRC. Post-translationally, the N-terminus is phosphorylated by host PRK2/PKN2. In terms of processing, ubiquitinated. Ubiquitination, most probably at Lys-2350, mediated by host IFI27 and SKP2 leads to proteasomal degradation, restricting viral infection. Ubiquitination by host TRIM22 leads to interruption of viral replication.

Its subcellular location is the host endoplasmic reticulum membrane. The protein localises to the host mitochondrion membrane. It is found in the virion. It localises to the host cytoplasm. The protein resides in the host nucleus. Its subcellular location is the host lipid droplet. The protein localises to the virion membrane. It is found in the host mitochondrion. It localises to the host cell membrane. The protein resides in the host perinuclear region. It carries out the reaction Hydrolysis of four peptide bonds in the viral precursor polyprotein, commonly with Asp or Glu in the P6 position, Cys or Thr in P1 and Ser or Ala in P1'.. It catalyses the reaction a ribonucleoside 5'-triphosphate + H2O = a ribonucleoside 5'-diphosphate + phosphate + H(+). The enzyme catalyses ATP + H2O = ADP + phosphate + H(+). The catalysed reaction is RNA(n) + a ribonucleoside 5'-triphosphate = RNA(n+1) + diphosphate. Its activity is regulated as follows. Inhibited by the antiviral drug hexamethylene amiloride. Inhibition by amantadine appears to be genotype-dependent. Also inhibited by long-alkyl-chain iminosugar derivatives. Activity is up-regulated by PRK2/PKN2-mediated phosphorylation. In terms of biological role, packages viral RNA to form a viral nucleocapsid, and promotes virion budding. Participates in the viral particle production as a result of its interaction with the non-structural protein 5A. Binds RNA and may function as a RNA chaperone to induce the RNA structural rearrangements taking place during virus replication. Modulates viral translation initiation by interacting with viral IRES and 40S ribosomal subunit. Affects various cell signaling pathways, host immunity and lipid metabolism. Prevents the establishment of cellular antiviral state by blocking the interferon-alpha/beta (IFN-alpha/beta) and IFN-gamma signaling pathways and by blocking the formation of phosphorylated STAT1 and promoting ubiquitin-mediated proteasome-dependent degradation of STAT1. Activates STAT3 leading to cellular transformation. Regulates the activity of cellular genes, including c-myc and c-fos. May repress the promoter of p53, and sequester CREB3 and SP110 isoform 3/Sp110b in the cytoplasm. Represses cell cycle negative regulating factor CDKN1A, thereby interrupting an important check point of normal cell cycle regulation. Targets transcription factors involved in the regulation of inflammatory responses and in the immune response: suppresses TNF-induced NF-kappa-B activation, and activates AP-1. Binds to dendritic cells (DCs) via C1QR1, resulting in down-regulation of T-lymphocytes proliferation. Alters lipid metabolism by interacting with hepatocellular proteins involved in lipid accumulation and storage. Induces up-regulation of FAS promoter activity, and thereby contributes to the increased triglyceride accumulation in hepatocytes (steatosis). Its function is as follows. Forms a heterodimer with envelope glycoprotein E2, which mediates virus attachment to the host cell, virion internalization through clathrin-dependent endocytosis and fusion with host membrane. Fusion with the host cell is most likely mediated by both E1 and E2, through conformational rearrangements of the heterodimer required for fusion rather than a classical class II fusion mechanism. E1/E2 heterodimer binds host apolipoproteins such as APOB and ApoE thereby forming a lipo-viro-particle (LVP). APOE associated to the LVP allows the initial virus attachment to cell surface receptors such as the heparan sulfate proteoglycans (HSPGs), syndecan-1 (SDC1), syndecan-1 (SDC2), the low-density lipoprotein receptor (LDLR) and scavenger receptor class B type I (SCARB1). The cholesterol transfer activity of SCARB1 allows E2 exposure and binding of E2 to SCARB1 and the tetraspanin CD81. E1/E2 heterodimer binding on CD81 activates the epithelial growth factor receptor (EGFR) signaling pathway. Diffusion of the complex E1-E2-EGFR-SCARB1-CD81 to the cell lateral membrane allows further interaction with Claudin 1 (CLDN1) and occludin (OCLN) to finally trigger HCV entry. Forms a heterodimer with envelope glycoprotein E1, which mediates virus attachment to the host cell, virion internalization through clathrin-dependent endocytosis and fusion with host membrane. Fusion with the host cell is most likely mediated by both E1 and E2, through conformational rearrangements of the heterodimer required for fusion rather than a classical class II fusion mechanism. The interaction between envelope glycoprotein E2 and host apolipoprotein E/APOE allows the proper assembly, maturation and infectivity of the viral particles. This interaction is probably promoted via the up-regulation of cellular autophagy by the virus. E1/E2 heterodimer binds host apolipoproteins such as APOB and APOE thereby forming a lipo-viro-particle (LVP). APOE associated to the LVP allows the initial virus attachment to cell surface receptors such as the heparan sulfate proteoglycans (HSPGs), syndecan-1 (SDC1), syndecan-1 (SDC2), the low-density lipoprotein receptor (LDLR) and scavenger receptor class B type I (SCARB1). The cholesterol transfer activity of SCARB1 allows E2 exposure and binding of E2 to SCARB1 and the tetraspanin CD81. E1/E2 heterodimer binding on CD81 activates the epithelial growth factor receptor (EGFR) signaling pathway. Diffusion of the complex E1-E2-EGFR-SCARB1-CD81 to the cell lateral membrane allows further interaction with Claudin 1 (CLDN1) and occludin (OCLN) to finally trigger HCV entry. Inhibits host EIF2AK2/PKR activation, preventing the establishment of an antiviral state. Viral ligand for CD209/DC-SIGN and CLEC4M/DC-SIGNR, which are respectively found on dendritic cells (DCs), and on liver sinusoidal endothelial cells and macrophage-like cells of lymph node sinuses. These interactions allow the capture of circulating HCV particles by these cells and subsequent facilitated transmission to permissive cells such as hepatocytes and lymphocyte subpopulations. The interaction between E2 and host amino acid transporter complex formed by SLC3A2 and SLC7A5/LAT1 may facilitate viral entry into host cell. Functionally, ion channel protein that acts as a viroporin and plays an essential role in the assembly, envelopment and secretion of viral particles. Regulates the host cell secretory pathway, which induces the intracellular retention of viral glycoproteins and favors assembly of viral particles. Creates a pore in acidic organelles and releases Ca(2+) and H(+) in the cytoplasm of infected cells, leading to a productive viral infection. High levels of cytoplasmic Ca(2+) may trigger membrane trafficking and transport of viral ER-associated proteins to viroplasms, sites of viral genome replication. This ionic imbalance induces the assembly of the inflammasome complex, which triggers the maturation of pro-IL-1beta into IL-1beta through the action of caspase-1. Targets also host mitochondria and induces mitochondrial depolarization. In addition of its role as a viroporin, acts as a lipid raft adhesion factor. In terms of biological role, cysteine protease required for the proteolytic auto-cleavage between the non-structural proteins NS2 and NS3. The N-terminus of NS3 is required for the function of NS2 protease (active region NS2-3). Promotes the initiation of viral particle assembly by mediating the interaction between structural and non-structural proteins. Its function is as follows. Displays three enzymatic activities: serine protease with a chymotrypsin-like fold, NTPase and RNA helicase. NS3 serine protease, in association with NS4A, is responsible for the cleavages of NS3-NS4A, NS4A-NS4B, NS4B-NS5A and NS5A-NS5B. The NS3/NS4A complex prevents phosphorylation of host IRF3, thus preventing the establishment of dsRNA induced antiviral state. The NS3/NS4A complex induces host amino acid transporter component SLC3A2, thus contributing to HCV propagation. NS3 RNA helicase binds to RNA and unwinds both dsDNA and dsRNA in the 3' to 5' direction, and likely resolves RNA complicated stable secondary structures in the template strand. Binds a single ATP and catalyzes the unzipping of a single base pair of dsRNA. Inhibits host antiviral proteins TBK1 and IRF3 thereby preventing the establishment of an antiviral state. Cleaves host MAVS/CARDIF thereby preventing the establishment of an antiviral state. Cleaves host TICAM1/TRIF, thereby disrupting TLR3 signaling and preventing the establishment of an antiviral state. Peptide cofactor which forms a non-covalent complex with the N-terminal of NS3 serine protease. The NS3/NS4A complex prevents phosphorylation of host IRF3, thus preventing the establishment of dsRNA induced antiviral state. The NS3/NS4A complex induces host amino acid transporter component SLC3A2, thus contributing to HCV propagation. Functionally, induces a specific membrane alteration that serves as a scaffold for the virus replication complex. This membrane alteration gives rise to the so-called ER-derived membranous web that contains the replication complex. NS4B self-interaction contributes to its function in membranous web formation. Promotes host TRIF protein degradation in a CASP8-dependent manner thereby inhibiting host TLR3-mediated interferon signaling. Disrupts the interaction between STING and TBK1 contributing to the inhibition of interferon signaling. In terms of biological role, phosphorylated protein that is indispensable for viral replication and assembly. Both hypo- and hyperphosphorylated states are required for the viral life cycle. The hyperphosphorylated form of NS5A is an inhibitor of viral replication. Involved in RNA-binding and especially in binding to the viral genome. Zinc is essential for RNA-binding. Participates in the viral particle production as a result of its interaction with the mature viral core protein. Its interaction with host VAPB may target the viral replication complex to vesicles. Down-regulates viral IRES translation initiation. Mediates interferon resistance, presumably by interacting with and inhibiting host EIF2AK2/PKR. Prevents BIN1-induced apoptosis. Acts as a transcriptional activator of some host genes important for viral replication when localized in the nucleus. Via the interaction with host PACSIN2, modulates lipid droplet formation in order to promote virion assembly. Modulates TNFRSF21/DR6 signaling pathway for viral propagation. Its function is as follows. RNA-dependent RNA polymerase that performs primer-template recognition and RNA synthesis during viral replication. Initiates RNA transcription/replication at a flavin adenine dinucleotide (FAD), resulting in a 5'- FAD cap on viral RNAs. In this way, recognition of viral 5' RNA by host pattern recognition receptors can be bypassed, thereby evading activation of antiviral pathways. The chain is Genome polyprotein from Hepatitis C virus genotype 1b (isolate Taiwan) (HCV).